A 418-amino-acid chain; its full sequence is EPS I polysaccharide export inner membrane protein EpsF (418 aa).

The next 10 helical transmembrane spans lie at 21-41 (VLVV…FPIA), 45-65 (CAAI…LATA), 142-162 (PLMV…IAIY), 170-190 (YVVF…GSAI), 222-242 (AGTH…MLFL), 262-282 (LLVL…EFVM), 296-316 (SAWE…AWLF), 326-346 (LTYF…PAVG), 347-367 (ARLF…FFFA), and 377-397 (KTLA…IVDV).

It to S.marcescens SfuB.

It localises to the cell inner membrane. In terms of biological role, probably involved in polymerization and/or export of exopolysaccharide EPS I which functions as a virulence factor. May play a role in export of EPS I or its intermediates across the membranes. This is EPS I polysaccharide export inner membrane protein EpsF (epsF) from Ralstonia solanacearum (Pseudomonas solanacearum).